Reading from the N-terminus, the 171-residue chain is 3-hydroxydecanoyl-[acyl-carrier-protein] dehydratase (171 aa).

Residue histidine 70 is part of the active site.

It belongs to the thioester dehydratase family. FabA subfamily. In terms of assembly, homodimer.

It localises to the cytoplasm. The enzyme catalyses a (3R)-hydroxyacyl-[ACP] = a (2E)-enoyl-[ACP] + H2O. It carries out the reaction (3R)-hydroxydecanoyl-[ACP] = (2E)-decenoyl-[ACP] + H2O. The catalysed reaction is (2E)-decenoyl-[ACP] = (3Z)-decenoyl-[ACP]. Its pathway is lipid metabolism; fatty acid biosynthesis. In terms of biological role, necessary for the introduction of cis unsaturation into fatty acids. Catalyzes the dehydration of (3R)-3-hydroxydecanoyl-ACP to E-(2)-decenoyl-ACP and then its isomerization to Z-(3)-decenoyl-ACP. Can catalyze the dehydratase reaction for beta-hydroxyacyl-ACPs with saturated chain lengths up to 16:0, being most active on intermediate chain length. This chain is 3-hydroxydecanoyl-[acyl-carrier-protein] dehydratase, found in Shewanella baltica (strain OS223).